Reading from the N-terminus, the 320-residue chain is Tyrosine phosphatase H3 (320 aa).

The region spanning 22 to 309 is the Tyrosine-protein phosphatase domain; it reads NFWEFVRLEH…AFCYKAVRYA (288 aa). The Phosphocysteine intermediate role is filled by cysteine 250.

The protein belongs to the protein-tyrosine phosphatase family.

The enzyme catalyses O-phospho-L-tyrosyl-[protein] + H2O = L-tyrosyl-[protein] + phosphate. In terms of biological role, suppresses host immune cell adhesion and phagocytosis. This is Tyrosine phosphatase H3 (H3) from Microplitis demolitor (Parasitoid wasp).